A 130-amino-acid chain; its full sequence is MSKDFNYATGRRKNAVARTRLYEGTGAITVNGKPYEDYFPRKTLQMIVQQPLKLTKTLGKFDIKVNADGGGVAGQAQAVRHGISRALIEIDPELRSILKRAGLLTRDARKKERKKYGQPGARAKFQYSKR.

A disordered region spans residues 109-130 (RKKERKKYGQPGARAKFQYSKR).

It belongs to the universal ribosomal protein uS9 family.

The chain is Small ribosomal subunit protein uS9 from Maridesulfovibrio salexigens (strain ATCC 14822 / DSM 2638 / NCIMB 8403 / VKM B-1763) (Desulfovibrio salexigens).